The primary structure comprises 83 residues: Conotoxin p21a (83 aa).

4-hydroxyproline; partial occurs at positions 24 and 43. Histidine amide is present on His83.

May form a non-covalent dimer. In terms of processing, contains 5 disulfide bonds. As to expression, expressed by the venom duct.

It is found in the secreted. This chain is Conotoxin p21a, found in Conus purpurascens (Purple cone).